Reading from the N-terminus, the 742-residue chain is TBC1 domain family member 25 (742 aa).

The segment at 1 to 22 is disordered; that stretch reads MRPPAQARWEGQGPTAPLRLRS. Ser-194 is modified (phosphoserine). Position 214 is a phosphothreonine (Thr-214). A Rab-GAP TBC domain is found at 282–488; that stretch reads GVEPSLRKVV…RMLEVTWSSL (207 aa). Residue Ser-560 is modified to Phosphoserine. The interval 592–664 is disordered; it reads SLSEPLLNSP…PPMGLPPPQE (73 aa). The span at 600-628 shows a compositional bias: low complexity; that stretch reads SPDPLLSTSSRPDSPSSSSPPSTQEASPS. Positions 649–663 are enriched in pro residues; that stretch reads KPVPPPPPMGLPPPQ.

Interacts (via N-terminus) with MAP1LC3B, GABARAP and GABARAPL2.

It localises to the cytoplasm. The protein localises to the cytoplasmic vesicle. Its subcellular location is the autophagosome. In terms of biological role, acts as a GTPase-activating protein specific for RAB33B. Involved in the regulation of autophagosome maturation, the process in which autophagosomes fuse with endosomes and lysosomes. The chain is TBC1 domain family member 25 (Tbc1d25) from Mus musculus (Mouse).